Here is a 904-residue protein sequence, read N- to C-terminus: Pantothenate kinase 2 (904 aa).

Residues 1–56 (MAANNNSDPILDEGGGGGVKHEAVGEAGEGKGGGGGAAATQAPAAMLPRSGSRPQL) form a disordered region. The interval 1–472 (MAANNNSDPI…LGDLNEKISW (472 aa)) is pantothenate kinase. The tract at residues 473 to 904 (MEKFVQKGTQ…DCICKFEPVP (432 aa)) is 4'-phosphopantetheine phosphatase. Residues Asp735, Asn736, and Asp771 each coordinate Mn(2+). A Subfamily II EGMGR motif motif is present at residues 855–859 (EGMGR).

This sequence in the N-terminal section; belongs to the type II pantothenate kinase family. In the C-terminal section; belongs to the damage-control phosphatase family. Phosphopantetheine phosphatase II subfamily. Mn(2+) is required as a cofactor. Ni(2+) serves as cofactor.

The enzyme catalyses (R)-pantothenate + ATP = (R)-4'-phosphopantothenate + ADP + H(+). It catalyses the reaction (R)-4'-phosphopantothenate + H2O = (R)-pantothenate + phosphate. The catalysed reaction is (R)-4'-phosphopantetheine + H2O = (R)-pantetheine + phosphate. It carries out the reaction (R)-4'-phosphopantetheine sulfonate + H2O = (R)-pantetheine sulfonate + phosphate. Its pathway is cofactor biosynthesis; coenzyme A biosynthesis; CoA from (R)-pantothenate: step 1/5. Catalyzes the phosphorylation of pantothenate the first step in CoA biosynthesis. May play a role in the physiological regulation of the intracellular CoA concentration. Functionally redudant with PANK1. The phosphatase activity shows preference for normal or oxidatively damaged intermediates of 4'-phosphopantetheine, which provides strong indirect evidence that the phosphatase activity pre-empts damage in the CoA pathway. Hydrolyzing excess 4'-phosphopantetheine could constitute a directed overflow mechanism to prevent its oxidation to the S-sulfonate, sulfonate, or other forms. Hydrolyzing 4'-phosphopantetheine sulfonate or S-sulfonate would forestall their conversion to inactive forms of CoA and acyl carrier protein. This is Pantothenate kinase 2 from Oryza sativa subsp. japonica (Rice).